Consider the following 323-residue polypeptide: tRNA-dihydrouridine(16) synthase (323 aa).

Residues 7-9 and Gln68 contribute to the FMN site; that span reads PME. Catalysis depends on Cys98, which acts as the Proton donor. Residues Lys139, 200 to 202, and 224 to 225 each bind FMN; these read NGE and CR.

The protein belongs to the Dus family. DusC subfamily. FMN is required as a cofactor.

It catalyses the reaction 5,6-dihydrouridine(16) in tRNA + NADP(+) = uridine(16) in tRNA + NADPH + H(+). It carries out the reaction 5,6-dihydrouridine(16) in tRNA + NAD(+) = uridine(16) in tRNA + NADH + H(+). Functionally, catalyzes the synthesis of 5,6-dihydrouridine (D), a modified base found in the D-loop of most tRNAs, via the reduction of the C5-C6 double bond in target uridines. Specifically modifies U16 in tRNAs. In Vibrio cholerae serotype O1 (strain ATCC 39315 / El Tor Inaba N16961), this protein is tRNA-dihydrouridine(16) synthase.